We begin with the raw amino-acid sequence, 66 residues long: Large ribosomal subunit protein uL29 (66 aa).

It belongs to the universal ribosomal protein uL29 family. In terms of assembly, part of the 50S ribosomal subunit.

This is Large ribosomal subunit protein uL29 (rpmC) from Bacillus subtilis (strain 168).